Consider the following 134-residue polypeptide: MWSDPIADMLTRIRNANVVFKDQVDIPASNLKKEIAEILKREGFIKDYTYIEDGKQGIIRIQMKYKGTRRNRERVIHGIVRISKPGRRIYVDKEHLPKVKNGLGIAILTTSKGVITDKQAREIGVGGEVIAYIW.

This sequence belongs to the universal ribosomal protein uS8 family. Part of the 30S ribosomal subunit. Contacts proteins S5 and S12.

In terms of biological role, one of the primary rRNA binding proteins, it binds directly to 16S rRNA central domain where it helps coordinate assembly of the platform of the 30S subunit. The sequence is that of Small ribosomal subunit protein uS8 from Thermosipho melanesiensis (strain DSM 12029 / CIP 104789 / BI429).